The sequence spans 2531 residues: Neurogenic locus notch homolog protein 1 (2531 aa).

Residues 1–18 (MPRLLTPLLCLTLLPALA) form the signal peptide. The Extracellular portion of the chain corresponds to 19–1725 (ARGLRCSQPS…VEPPLPSQLH (1707 aa)). EGF-like domains are found at residues 20 to 58 (RGLRCSQPSGTCLNGGRCEVANGTEACVCSGAFVGQRCQ), 59 to 99 (DSNP…PLCL), 102 to 139 (LDNACLANPCRNGGTCDLLTLTEYKCRCPPGWSGKSCQ), and 140 to 176 (QADPCASNPCANGGQCLPFESSYICRCPPGFHGPTCR). Intrachain disulfides connect cysteine 24–cysteine 37, cysteine 31–cysteine 46, cysteine 63–cysteine 74, cysteine 68–cysteine 87, cysteine 89–cysteine 98, cysteine 106–cysteine 117, cysteine 111–cysteine 127, cysteine 129–cysteine 138, cysteine 144–cysteine 155, cysteine 149–cysteine 164, cysteine 166–cysteine 175, cysteine 182–cysteine 195, cysteine 189–cysteine 204, cysteine 206–cysteine 215, cysteine 222–cysteine 233, cysteine 227–cysteine 243, cysteine 245–cysteine 254, cysteine 261–cysteine 272, cysteine 266–cysteine 281, cysteine 283–cysteine 292, cysteine 299–cysteine 312, cysteine 306–cysteine 321, cysteine 323–cysteine 332, cysteine 339–cysteine 350, cysteine 344–cysteine 359, cysteine 361–cysteine 370, cysteine 376–cysteine 387, cysteine 381–cysteine 398, cysteine 400–cysteine 409, cysteine 416–cysteine 429, cysteine 423–cysteine 438, and cysteine 440–cysteine 449. A glycan (O-linked (Glc...) serine) is linked at serine 65. Threonine 73 is a glycosylation site (O-linked (Fuc...) threonine). Threonine 116 is a glycosylation site (O-linked (Fuc...) threonine). O-linked (Glc...) serine glycosylation is present at serine 146. The region spanning 178-216 (DVNECSQNPGLCRHGGTCHNEIGSYRCACRATHTGPHCE) is the EGF-like 5; calcium-binding domain. O-linked (Fuc...) threonine glycosylation occurs at threonine 194. An EGF-like 6 domain is found at 218–255 (PYVPCSPSPCQNGGTCRPTGDTTHECACLPGFAGQNCE). Threonine 232 is a glycosylation site (O-linked (Fuc...) threonine; alternate). Threonine 232 carries an O-linked (GalNAc...) threonine; alternate glycan. One can recognise an EGF-like 7; calcium-binding domain in the interval 257–293 (NVDDCPGNNCKNGGACVDGVNTYNCRCPPEWTGQYCT). An EGF-like 8; calcium-binding domain is found at 295 to 333 (DVDECQLMPNACQNGGTCHNTHGGYNCVCVNGWTGEDCS). A glycan (O-linked (Fuc...) threonine) is linked at threonine 311. Residues 335 to 371 (NIDDCASAACFQGATCHDRVASFYCECPHGRTGLLCH) form the EGF-like 9; calcium-binding domain. Serine 341 carries O-linked (Glc...) serine glycosylation. Threonine 349 carries an O-linked (Fuc...) threonine glycan. In terms of domain architecture, EGF-like 10; calcium-binding spans 372 to 410 (LNDACISNPCNEGSNCDTNPVNGKAICTCPSGYTGPACS). O-linked (Glc...) serine glycosylation is present at serine 378. Positions 412-450 (DVDECALGANPCEHAGKCLNTLGSFECQCLQGYTGPRCE) constitute an EGF-like 11; calcium-binding domain. An interaction with DLL4 region spans residues 420–421 (AN). Positions 432 and 435 each coordinate Ca(2+). A glycan (O-linked (Glc...) serine) is linked at serine 435. Residues 448 to 452 (RCEID) form an interaction with DLL4 region. Positions 452, 453, and 455 each coordinate Ca(2+). The EGF-like 12; calcium-binding domain maps to 452 to 488 (DVNECISNPCQNDATCLDQIGEFQCICMPGYEGVYCE). Cystine bridges form between cysteine 456-cysteine 467, cysteine 461-cysteine 476, and cysteine 478-cysteine 487. An O-linked (Glc...) serine glycan is attached at serine 458. O-linked (Fuc...) threonine glycosylation occurs at threonine 466. The Ca(2+) site is built by aspartate 469 and glutamine 470. The Ca(2+) site is built by asparagine 490, threonine 491, and glutamate 493. One can recognise an EGF-like 13; calcium-binding domain in the interval 490–526 (NTDECASSPCLHNGHCMDKINEFQCQCPKGFNGHLCQ). Intrachain disulfides connect cysteine 494/cysteine 505, cysteine 499/cysteine 514, cysteine 516/cysteine 525, cysteine 532/cysteine 543, cysteine 537/cysteine 552, cysteine 554/cysteine 563, cysteine 570/cysteine 580, cysteine 575/cysteine 589, cysteine 591/cysteine 600, cysteine 607/cysteine 618, cysteine 612/cysteine 627, cysteine 629/cysteine 638, cysteine 645/cysteine 655, cysteine 650/cysteine 664, cysteine 666/cysteine 675, cysteine 682/cysteine 693, cysteine 687/cysteine 702, cysteine 704/cysteine 713, cysteine 720/cysteine 730, cysteine 725/cysteine 739, cysteine 741/cysteine 750, cysteine 757/cysteine 768, cysteine 762/cysteine 777, cysteine 779/cysteine 788, cysteine 795/cysteine 806, cysteine 800/cysteine 815, cysteine 817/cysteine 826, cysteine 833/cysteine 844, cysteine 838/cysteine 855, cysteine 857/cysteine 866, cysteine 873/cysteine 884, cysteine 878/cysteine 893, cysteine 895/cysteine 904, cysteine 911/cysteine 922, cysteine 916/cysteine 931, cysteine 933/cysteine 942, cysteine 949/cysteine 960, cysteine 954/cysteine 969, cysteine 971/cysteine 980, cysteine 987/cysteine 998, cysteine 992/cysteine 1007, cysteine 1009/cysteine 1018, cysteine 1025/cysteine 1036, cysteine 1030/cysteine 1045, cysteine 1047/cysteine 1056, cysteine 1063/cysteine 1074, cysteine 1068/cysteine 1083, cysteine 1085/cysteine 1094, cysteine 1101/cysteine 1122, cysteine 1116/cysteine 1131, cysteine 1133/cysteine 1142, cysteine 1149/cysteine 1160, cysteine 1154/cysteine 1169, cysteine 1171/cysteine 1180, cysteine 1187/cysteine 1198, cysteine 1192/cysteine 1207, cysteine 1209/cysteine 1218, cysteine 1225/cysteine 1244, cysteine 1238/cysteine 1253, cysteine 1255/cysteine 1264, cysteine 1271/cysteine 1284, cysteine 1276/cysteine 1293, cysteine 1295/cysteine 1304, cysteine 1311/cysteine 1322, cysteine 1316/cysteine 1334, cysteine 1336/cysteine 1345, cysteine 1352/cysteine 1363, cysteine 1357/cysteine 1372, cysteine 1374/cysteine 1383, cysteine 1391/cysteine 1403, cysteine 1397/cysteine 1414, cysteine 1416/cysteine 1425, cysteine 1449/cysteine 1472, cysteine 1454/cysteine 1467, and cysteine 1463/cysteine 1479. O-linked (Glc...) serine glycosylation occurs at serine 496. The Ca(2+) site is built by aspartate 507 and lysine 508. The region spanning 528 to 564 (DVDECASTPCKNGAKCLDGPNTYTCVCTEGYTGTHCE) is the EGF-like 14; calcium-binding domain. Serine 534 is a glycosylation site (O-linked (Glc...) serine). The EGF-like 15; calcium-binding domain maps to 566 to 601 (DIDECDPDPCHYGSCKDGVATFTCLCQPGYTGHHCE). An EGF-like 16; calcium-binding domain is found at 603-639 (NINECHSQPCRHGGTCQDRDNSYLCLCLKGTTGPNCE). An O-linked (Glc...) serine glycan is attached at serine 609. Threonine 617 is a glycosylation site (O-linked (Fuc...) threonine). Residues 641-676 (NLDDCASNPCDSGTCLDKIDGYECACEPGYTGSMCN) enclose the EGF-like 17; calcium-binding domain. A glycan (O-linked (Glc...) serine) is linked at serine 647. An EGF-like 18; calcium-binding domain is found at 678–714 (NIDECAGSPCHNGGTCEDGIAGFTCRCPEGYHDPTCL). Threonine 692 carries an O-linked (Fuc...) threonine glycan. The EGF-like 19; calcium-binding domain maps to 716–751 (EVNECNSNPCIHGACRDGLNGYKCDCAPGWSGTNCD). Serine 722 is a glycosylation site (O-linked (Glc...) serine). The region spanning 753-789 (NNNECESNPCVNGGTCKDMTSGYVCTCREGFSGPNCQ) is the EGF-like 20; calcium-binding domain. O-linked (Glc...) serine glycosylation occurs at serine 759. The O-linked (Fuc...) threonine glycan is linked to threonine 767. Serine 784 carries O-linked (GlcNAc) serine glycosylation. Residues 791–827 (NINECASNPCLNQGTCIDDVAGYKCNCPLPYTGATCE) enclose the EGF-like 21; calcium-binding domain. Serine 797 carries O-linked (Glc...) serine glycosylation. Residue threonine 805 is glycosylated (O-linked (Fuc...) threonine). The region spanning 829–867 (VLAPCATSPCKNSGVCKESEDYESFSCVCPTGWQGQTCE) is the EGF-like 22 domain. The region spanning 869-905 (DINECVKSPCRHGASCQNTNGSYRCLCQAGYTGRNCE) is the EGF-like 23; calcium-binding domain. N-linked (GlcNAc...) asparagine glycosylation occurs at asparagine 888. The O-linked (GlcNAc) threonine glycan is linked to threonine 900. In terms of domain architecture, EGF-like 24 spans 907-943 (DIDDCRPNPCHNGGSCTDGINTAFCDCLPGFQGAFCE). Residue serine 921 is glycosylated (O-linked (Fuc) serine). One can recognise an EGF-like 25; calcium-binding domain in the interval 945 to 981 (DINECASNPCQNGANCTDCVDSYTCTCPVGFNGIHCE). Serine 951 carries an O-linked (Glc...) serine glycan. Asparagine 959 carries N-linked (GlcNAc...) asparagine glycosylation. The region spanning 983-1019 (NTPDCTESSCFNGGTCVDGINSFTCLCPPGFTGSYCQ) is the EGF-like 26 domain. Threonine 997 carries O-linked (Fuc...) threonine glycosylation. In terms of domain architecture, EGF-like 27; calcium-binding spans 1021 to 1057 (DVNECDSRPCLHGGTCQDSYGTYKCTCPQGYTGLNCQ). Serine 1027 carries O-linked (Glc...) serine glycosylation. O-linked (Fuc...) threonine glycosylation occurs at threonine 1035. 2 consecutive EGF-like domains span residues 1059-1095 (LVRWCDSAPCKNGGRCWQTNTQYHCECRSGWTGVNCD) and 1097-1143 (LSVS…SYCE). O-linked (Glc...) serine glycosylation is present at serine 1065. The EGF-like 30; calcium-binding domain occupies 1145–1181 (EVDECSPNPCQNGATCTDYLGGFSCKCVAGYHGSNCS). Threonine 1159 carries O-linked (Fuc...) threonine glycosylation. A glycan (N-linked (GlcNAc...) asparagine) is linked at asparagine 1179. An EGF-like 31; calcium-binding domain is found at 1183–1219 (EINECLSQPCQNGGTCIDLTNSYKCSCPRGTQGVHCE). O-linked (Glc...) serine glycosylation occurs at serine 1189. O-linked (Fuc...) threonine glycosylation is present at threonine 1197. Residues 1221-1265 (NVDDCHPPLDPASRSPKCFNNGTCVDQVGGYTCTCPPGFVGERCE) enclose the EGF-like 32; calcium-binding domain. A glycan (N-linked (GlcNAc...) asparagine) is linked at asparagine 1241. EGF-like domains are found at residues 1267 to 1305 (DVNECLSNPCDPRGTQNCVQRVNDFHCECRAGHTGRRCE), 1307 to 1346 (VINGCRGKPCKNGGVCAVASNTARGFICRCPAGFEGATCE), 1348 to 1384 (DARTCGSLRCLNGGTCISGPRSPTCLCLGSFTGPECQ), and 1387 to 1426 (ASSPCVGSNPCYNQGTCEPTSENPFYRCLCPAKFNGLLCH). Residue serine 1273 is glycosylated (O-linked (Glc...) serine). The O-linked (Fuc...) threonine glycan is linked to threonine 1362. The O-linked (GlcNAc...) threonine glycan is linked to threonine 1379. A glycan (O-linked (Fuc...) threonine; alternate) is linked at threonine 1402. An O-linked (GalNAc...) threonine; alternate glycan is attached at threonine 1402. LNR repeat units lie at residues 1449 to 1489 (CELP…PWKN), 1490 to 1531 (CTQS…CNPL), and 1532 to 1571 (YDQYCKDHFSDGHCDQGCNSAECEWDGLDCAEHVPERLAA). Ca(2+)-binding residues include aspartate 1457, asparagine 1460, aspartate 1475, and aspartate 1478. A glycan (N-linked (GlcNAc...) asparagine) is linked at asparagine 1489. Cystine bridges form between cysteine 1490/cysteine 1514, cysteine 1496/cysteine 1509, cysteine 1505/cysteine 1521, cysteine 1536/cysteine 1549, and cysteine 1545/cysteine 1561. N-linked (GlcNAc...) asparagine glycosylation is present at asparagine 1587. The tract at residues 1718–1750 (PPLPSQLHLMYVAAAAFVLLFFVGCGVLLSRKR) is interaction with PSEN1. Residues 1726–1746 (LMYVAAAAFVLLFFVGCGVLL) form a helical membrane-spanning segment. The Cytoplasmic segment spans residues 1747-2531 (SRKRRRQHGQ…QITHIPEAFK (785 aa)). Lysine 1749 participates in a covalent cross-link: Glycyl lysine isopeptide (Lys-Gly) (interchain with G-Cter in ubiquitin). The disordered stretch occupies residues 1770 to 1798 (KKKRREPLGEDSVGLKPLKNASDGALMDD). A Phosphothreonine modification is found at threonine 1851. ANK repeat units lie at residues 1917-1946 (TGETALHLAARYSRSDAAKRLLEASADANI), 1950-1980 (MGRTPLHAAVSADAQGVFQILLRNRATDLDA), 1984-2013 (DGTTPLILAARLAVEGMLEDLINSHADVNA), 2017-2046 (LGKSALHWAAAVNNVDAAVVLLKNGANKDM), and 2050-2079 (KEETPLFLAAREGSYETAKVLLDHFANRDI). The interval 1937–1945 (LLEASADAN) is HIF1AN-binding. (3S)-3-hydroxyasparagine; by HIF1AN; partial is present on asparagine 1945. An HIF1AN-binding region spans residues 2004–2012 (LINSHADVN). Asparagine 2012 bears the (3S)-3-hydroxyasparagine; by HIF1AN; partial mark. Disordered stretches follow at residues 2140 to 2185 (KSAT…DSSS), 2382 to 2428 (QPQN…SLPV), and 2440 to 2531 (PTSL…EAFK). Residues 2382–2395 (QPQNLQPPSQPHLS) show a composition bias toward low complexity. Over residues 2440 to 2478 (PTSLPSSMVPPMTTTQFLTPPSQHSYSSSPVDNTPSHQL) the composition is skewed to polar residues. Residues 2488–2503 (PSPESPDQWSSSSPHS) show a composition bias toward low complexity. A compositionally biased stretch (polar residues) spans 2504–2524 (NISDWSEGISSPPTTMPSQIT).

The protein belongs to the NOTCH family. In terms of assembly, heterodimer of a C-terminal fragment N(TM) and an N-terminal fragment N(EC) which are probably linked by disulfide bonds. Interacts with DNER, DTX1, DTX2 and RBPJ/RBPSUH. Also interacts with MAML1, MAML2 and MAML3 which act as transcriptional coactivators for NOTCH1. Notch 1 intracellular domain interacts with SNW1; the interaction involves multimerized NOTCH1 NICD and is implicated in a formation of an intermediate preactivation complex which associates with DNA-bound CBF-1/RBPJ. The activated membrane-bound form interacts with AAK1 which promotes NOTCH1 stabilization. Forms a trimeric complex with FBXW7 and SGK1. Interacts with HIF1AN. HIF1AN negatively regulates the function of notch intracellular domain (NICD), accelerating myogenic differentiation. Interacts (via NICD) with SNAI1 (via zinc fingers); the interaction induces SNAI1 degradation via MDM2-mediated ubiquitination and inhibits SNAI1-induced cell invasion. Interacts (via NICD) with MDM2A. Interacts (via NICD) with BCL6; the interaction decreases MAML1 recruitment by NOTCH1 NICD on target genes DNA and inhibits NOTCH1 transactivation activity. Interacts with THBS4. Interacts (via the EGF-like repeat region) with CCN3 (via CTCK domain). Interacts (via EGF-like domains) with DLL4 (via N-terminal DSL and MNNL domains). Interacts with ZMIZ1. Interacts (via NICD domain) with MEGF10 (via the cytoplasmic domain). Interacts with DLL1 and JAG1. Interacts (via NICD domain) with PRAG1. Forms a complex with PRAG1, N1ICD and MAML1, in a MAML1-dependent manner. Interacts (via transmembrane region) with PSEN1; the interaction is direct. Interacts with ZFP64. Synthesized in the endoplasmic reticulum as an inactive form which is proteolytically cleaved by a furin-like convertase in the trans-Golgi network before it reaches the plasma membrane to yield an active, ligand-accessible form. Cleavage results in a C-terminal fragment N(TM) and a N-terminal fragment N(EC). Following ligand binding, it is cleaved by ADAM17 to yield a membrane-associated intermediate fragment called notch extracellular truncation (NEXT). Following endocytosis, this fragment is then cleaved by one of the catalytic subunits of gamma-secretase (PSEN1 or PSEN2) to release a Notch-derived peptide containing the intracellular domain (NICD) from the membrane. Post-translationally, phosphorylated. In terms of processing, O-linked glycosylation by GALNT11 is involved in determination of left/right symmetry: glycosylation promotes activation of NOTCH1, possibly by promoting cleavage by ADAM17, modulating the balance between motile and immotile (sensory) cilia at the left-right organiser (LRO). O-glycosylated on the EGF-like domains. O-glucosylated at Ser-435 by KDELC1 and KDELC2. Contains both O-linked fucose and O-linked glucose in the EGF-like domains 11, 12 and 13, which are interacting with the residues on DLL4. O-glycosylation at Ser-1027 is only partial. MFNG-, RFNG- and LFNG-mediated modification of O-fucose residues at specific EGF-like domains results in inhibition of its activation by JAG1 and enhancement of its activation by DLL1 via an increased binding to DLL1. Ubiquitinated. Undergoes 'Lys-29'-linked polyubiquitination by ITCH; promotes the lysosomal degradation of non-activated internalized NOTCH1. Deubiquitination by USP12 is required for transport of internalized non-activated receptor from late endosomes to lysosomes for degradation. Monoubiquitination at Lys-1749 is required for activation by gamma-secretase cleavage, it promotes interaction with AAK1, which stabilizes it. Deubiquitination by EIF3F is necessary for nuclear import of activated Notch. Post-translationally, hydroxylated at Asn-1945 and Asn-2012 by HIF1AN. Hydroxylation reduces affinity for HI1AN and may thus indirectly modulate negative regulation of NICD. As to expression, highly expressed in the brain, lung and thymus. Expressed at lower levels in the spleen, bone-marrow, spinal cord, eyes, mammary gland, liver, intestine, skeletal muscle, kidney and heart. In the hair follicle, highly expressed exclusively in the epithelial compartment.

The protein resides in the cell membrane. It is found in the late endosome membrane. The protein localises to the nucleus. Functions as a receptor for membrane-bound ligands Jagged-1 (JAG1), Jagged-2 (JAG2) and Delta-1 (DLL1) to regulate cell-fate determination. Upon ligand activation through the released notch intracellular domain (NICD) it forms a transcriptional activator complex with RBPJ/RBPSUH and activates genes of the enhancer of split locus. Affects the implementation of differentiation, proliferation and apoptotic programs. Involved in angiogenesis; negatively regulates endothelial cell proliferation and migration and angiogenic sprouting. Involved in the maturation of both CD4(+) and CD8(+) cells in the thymus. Important for follicular differentiation and possibly cell fate selection within the follicle. During cerebellar development, functions as a receptor for neuronal DNER and is involved in the differentiation of Bergmann glia. Represses neuronal and myogenic differentiation. May play an essential role in postimplantation development, probably in some aspect of cell specification and/or differentiation. May be involved in mesoderm development, somite formation and neurogenesis. May enhance HIF1A function by sequestering HIF1AN away from HIF1A. Required for the THBS4 function in regulating protective astrogenesis from the subventricular zone (SVZ) niche after injury. Involved in determination of left/right symmetry by modulating the balance between motile and immotile (sensory) cilia at the left-right organiser (LRO). The chain is Neurogenic locus notch homolog protein 1 (Notch1) from Mus musculus (Mouse).